Reading from the N-terminus, the 945-residue chain is Leucine--tRNA ligase 1 (945 aa).

The 'HIGH' region motif lies at 42 to 52 (PYTNSPLHIGH). The short motif at 625 to 629 (KMSKS) is the 'KMSKS' region element. An ATP-binding site is contributed by Lys-628.

Belongs to the class-I aminoacyl-tRNA synthetase family.

Its subcellular location is the cytoplasm. It catalyses the reaction tRNA(Leu) + L-leucine + ATP = L-leucyl-tRNA(Leu) + AMP + diphosphate. This chain is Leucine--tRNA ligase 1, found in Sulfurisphaera tokodaii (strain DSM 16993 / JCM 10545 / NBRC 100140 / 7) (Sulfolobus tokodaii).